The primary structure comprises 116 residues: Large ribosomal subunit protein uL18 (116 aa).

The protein belongs to the universal ribosomal protein uL18 family. In terms of assembly, part of the 50S ribosomal subunit; part of the 5S rRNA/L5/L18/L25 subcomplex. Contacts the 5S and 23S rRNAs.

Functionally, this is one of the proteins that bind and probably mediate the attachment of the 5S RNA into the large ribosomal subunit, where it forms part of the central protuberance. The protein is Large ribosomal subunit protein uL18 of Acinetobacter baumannii (strain AB307-0294).